A 691-amino-acid polypeptide reads, in one-letter code: Penicillin-binding protein 2D (691 aa).

Over 1 to 19 (MDAMTNKRLRLTLKTVRAF) the chain is Cytoplasmic. A helical; Signal-anchor for type II membrane protein transmembrane segment spans residues 20-40 (IFLGAFAALAAAAVFMTVILI). Over 41–691 (AKYQGAPSVQ…WWDKWLGRHH (651 aa)) the chain is Extracellular. The transglycosylase stretch occupies residues 55–223 (TILYASDGSK…PSGYSPYVNE (169 aa)). The active-site Proton donor; for transglycosylase activity is the glutamate 94. The interval 327–605 (VGFSAIDPRT…AKTIWADFME (279 aa)) is transpeptidase. Serine 365 acts as the Acyl-ester intermediate; for transpeptidase activity in catalysis. Positions 663-691 (AKQTKDRLPSKEKPASEKKWWDKWLGRHH) are disordered. Residues 664–691 (KQTKDRLPSKEKPASEKKWWDKWLGRHH) show a composition bias toward basic and acidic residues.

In the N-terminal section; belongs to the glycosyltransferase 51 family. It in the C-terminal section; belongs to the transpeptidase family.

Its subcellular location is the cell membrane. It catalyses the reaction [GlcNAc-(1-&gt;4)-Mur2Ac(oyl-L-Ala-gamma-D-Glu-L-Lys-D-Ala-D-Ala)](n)-di-trans,octa-cis-undecaprenyl diphosphate + beta-D-GlcNAc-(1-&gt;4)-Mur2Ac(oyl-L-Ala-gamma-D-Glu-L-Lys-D-Ala-D-Ala)-di-trans,octa-cis-undecaprenyl diphosphate = [GlcNAc-(1-&gt;4)-Mur2Ac(oyl-L-Ala-gamma-D-Glu-L-Lys-D-Ala-D-Ala)](n+1)-di-trans,octa-cis-undecaprenyl diphosphate + di-trans,octa-cis-undecaprenyl diphosphate + H(+). The catalysed reaction is Preferential cleavage: (Ac)2-L-Lys-D-Ala-|-D-Ala. Also transpeptidation of peptidyl-alanyl moieties that are N-acyl substituents of D-alanine.. It participates in cell wall biogenesis; peptidoglycan biosynthesis. Involved in the polymerization and cross-linking of spore peptidoglycan. May be required for synthesis of the spore germ cell wall, the first layer of peptidoglycan synthesized on the surface of the inner forespore membrane. This Bacillus subtilis (strain 168) protein is Penicillin-binding protein 2D (pbpG).